A 196-amino-acid chain; its full sequence is SPRY domain-containing protein 7 (196 aa).

Alanine 2 is modified (N-acetylalanine). One can recognise a B30.2/SPRY domain in the interval 2–184 (AASAWCCLRC…FSEFYHTPPP (183 aa)).

The polypeptide is SPRY domain-containing protein 7 (Spryd7) (Mus musculus (Mouse)).